A 669-amino-acid polypeptide reads, in one-letter code: MEGNKLEEQDSSPPQSTPGLMKGNKREEQGLGPEPAAPQQPTAEEEALIEFHRSYRELFEFFCNNTTIHGAIRLVCSQHNRMKTAFWAVLWLCTFGMMYWQFGLLFGEYFSYPVSLNINLNSDKLVFPAVTICTLNPYRYPEIKEELEELDRITEQTLFDLYKYSSFTTLVAGSRSRRDLRGTLPHPLQRLRVPPPPHGARRARSVASSLRDNNPQVDWKDWKIGFQLCNQNKSDCFYQTYSSGVDAVREWYRFHYINILSRLPETLPSLEEDTLGNFIFACRFNQVSCNQANYSHFHHPMYGNCYTFNDKNNSNLWMSSMPGINNGLSLMLRAEQNDFIPLLSTVTGARVMVHGQDEPAFMDDGGFNLRPGVETSISMRKETLDRLGGDYGDCTKNGSDVPVENLYPSKYTQQVCIHSCFQESMIKECGCAYIFYPRPQNVEYCDYRKHSSWGYCYYKLQVDFSSDHLGCFTKCRKPCSVTSYQLSAGYSRWPSVTSQEWVFQMLSRQNNYTVNNKRNGVAKVNIFFKELNYKTNSESPSVTMVTLLSNLGSQWSLWFGSSVLSVVEMAELVFDLLVIMFLMLLRRFRSRYWSPGRGGRGAQEVASTLASSPPSHFCPHPMSLSLSQPGPAPSPALTAPPPAYATLGPRPSPGGSAGASSSTCPLGGP.

Positions 1–43 are disordered; it reads MEGNKLEEQDSSPPQSTPGLMKGNKREEQGLGPEPAAPQQPTA. Residues 1 to 85 lie on the Cytoplasmic side of the membrane; that stretch reads MEGNKLEEQD…CSQHNRMKTA (85 aa). Over residues 33–42 the composition is skewed to low complexity; the sequence is PEPAAPQQPT. A helical membrane pass occupies residues 86-106; sequence FWAVLWLCTFGMMYWQFGLLF. The Extracellular segment spans residues 107–562; the sequence is GEYFSYPVSL…SQWSLWFGSS (456 aa). Cystine bridges form between Cys-133/Cys-305, Cys-229/Cys-236, Cys-282/Cys-289, Cys-394/Cys-479, Cys-416/Cys-456, Cys-416/Cys-475, Cys-420/Cys-471, Cys-429/Cys-456, Cys-429/Cys-479, and Cys-431/Cys-445. Residues 175–243 are gating release of inhibition by proteolysis (GRIP); protease-sensitive region that is responsible for the proteolytic activation of the channel; it reads RSRRDLRGTL…SDCFYQTYSS (69 aa). The chain crosses the membrane as a helical span at residues 563–583; sequence VLSVVEMAELVFDLLVIMFLM. The Cytoplasmic segment spans residues 584-669; that stretch reads LLRRFRSRYW…SSSTCPLGGP (86 aa). The disordered stretch occupies residues 620-669; it reads HPMSLSLSQPGPAPSPALTAPPPAYATLGPRPSPGGSAGASSSTCPLGGP. Residues 630–643 are compositionally biased toward pro residues; that stretch reads GPAPSPALTAPPPA. Residues 640–644 carry the PY motif; recruits WW domain-containing proteins and is thereby required for ubiquitination and inhibition of the channel by NEDD4 and NEDD4L motif; the sequence is PPPAY.

The protein belongs to the amiloride-sensitive sodium channel (TC 1.A.6) family. SCNN1A subfamily. As to quaternary structure, heterotrimer; containing an alpha/SCNN1A, a beta/SCNN1B and a gamma/SCNN1G subunit. Interacts with WWP1 (via WW domains). Interacts with WWP2 (via WW domains); inhibits the channel. Interacts with BPIFA1; the interaction is indirect via SCNN1B and inhibits the proteolytic processing of SCNN1A and SCNN1G and the activation of ENaC. Interacts with the full-length immature form of PCSK9 (pro-PCSK9); inhibits ENaC by promoting its proteasomal degradation. In terms of processing, ubiquitinated. Can be ubiquitinated at multiple sites and undergo monoubiquitination and polyubiquitination. Ubiquitination by NEDD4 or NEDD4L inhibits the ENaC channel through endocytosis, intracellular retention and degradation of its individual subunits. Post-translationally, ENaC is activated through the proteolytic maturation of its subunits. Furin cleaves the SCNN1A subunit, which results in a stepwise increase in the open probability of the channel due to the release of an inhibitory tract. BPIFA1, which is recruited by the SCNN1B subunit, prevents the proteolytic activation of ENaC. N-glycosylated. In terms of tissue distribution, expressed in the female reproductive tract, from the fimbrial end of the fallopian tube to the endometrium (at protein level). Expressed in kidney (at protein level). In the respiratory tract, expressed in the bronchial epithelium (at protein level). Highly expressed in lung. Detected at intermediate levels in pancreas and liver, and at low levels in heart and placenta. in skin, expressed in keratinocytes, melanocytes and Merkel cells of the epidermal sub-layers, stratum basale, stratum spinosum and stratum granulosum (at protein level). Expressed in the outer root sheath of the hair follicles (at protein level). Detected in both peripheral and central cells of the sebaceous gland (at protein level). Expressed by eccrine sweat glands (at protein level). In skin, also expressed by arrector pili muscle cells and intradermal adipocytes. Isoform 1 and isoform 2 predominate in all tissues. As to expression, detected in lung and heart.

Its subcellular location is the apical cell membrane. It localises to the cell projection. The protein resides in the cilium. It is found in the cytoplasmic granule. The protein localises to the cytoplasm. Its subcellular location is the cytoplasmic vesicle. It localises to the secretory vesicle. The protein resides in the acrosome. It is found in the flagellum. It catalyses the reaction Na(+)(in) = Na(+)(out). With respect to regulation, originally identified and characterized by its inhibition by the diuretic drug amiloride. Inhibited by phenamil. Its function is as follows. This is one of the three pore-forming subunits of the heterotrimeric epithelial sodium channel (ENaC), a critical regulator of sodium balance and fluid homeostasis. ENaC operates in epithelial tissues, where it mediates the electrodiffusion of sodium ions from extracellular fluid through the apical membrane of cells, with water following osmotically. It plays a key role in maintaining sodium homeostasis through electrogenic sodium reabsorption in the kidneys. Additionally, ENaC is essential for airway surface liquid homeostasis, which is crucial for proper mucus clearance. In terms of biological role, not functional. In Homo sapiens (Human), this protein is Epithelial sodium channel subunit alpha.